The chain runs to 383 residues: Cathepsin D (383 aa).

The signal sequence occupies residues 1 to 18 (MKLLILTLFLATIVLAQA). Positions 19–48 (LTVPLNFHQASRESRRRVPQKWSNRLSALN) are excised as a propeptide. In terms of domain architecture, Peptidase A1 spans 63 to 378 (YYGAITIGTP…DFGNKQVGFA (316 aa)). Residue Asp-81 is part of the active site. A disulfide bridge links Cys-94 with Cys-101. 2 N-linked (GlcNAc...) asparagine glycosylation sites follow: Asn-118 and Asn-238. A disulfide bridge links Cys-259 with Cys-263. Asp-268 is a catalytic residue. Cys-302 and Cys-339 form a disulfide bridge. Asn-310 carries N-linked (GlcNAc...) asparagine glycosylation.

The protein belongs to the peptidase A1 family. In terms of assembly, monomer. In terms of processing, N-glycosylated on 2 out of the 3 potential sites. Glycans contain sulfated Mannose.

Its subcellular location is the lysosome. The protein localises to the secreted. The enzyme catalyses Specificity similar to, but narrower than, that of pepsin A. Does not cleave the 4-Gln-|-His-5 bond in B chain of insulin.. Protease that may act during cell growth and/or development. The polypeptide is Cathepsin D (ctsD) (Dictyostelium discoideum (Social amoeba)).